Reading from the N-terminus, the 260-residue chain is Lysine/arginine/ornithine-binding periplasmic protein (260 aa).

The signal sequence occupies residues 1-22; the sequence is MKKSILALSLLVGLSTAASSYA. Aspartate 33 contributes to the L-arginine binding site. Aspartate 33 lines the L-lysine pocket. L-ornithine is bound at residue aspartate 33. Cysteine 60 and cysteine 67 form a disulfide bridge. Positions 91, 92, 94, 99, 143, and 183 each coordinate L-arginine. Residues serine 91, serine 92, serine 94, arginine 99, threonine 143, and aspartate 183 each coordinate L-ornithine. Positions 92, 94, 99, and 143 each coordinate L-lysine.

This sequence belongs to the bacterial solute-binding protein 3 family. The complex is composed of two ATP-binding proteins (HisP), two transmembrane proteins (HisM and HisQ) and a solute-binding protein (ArgT).

It is found in the periplasm. Part of the ABC transporter complex HisPMQ-ArgT involved in lysine/arginine/ornithine transport. Binds lysine, arginine and ornithine. Stimulates ATPase activity of HisP. This chain is Lysine/arginine/ornithine-binding periplasmic protein (argT), found in Escherichia coli (strain K12).